A 147-amino-acid chain; its full sequence is Biogenesis of lysosome-related organelles complex 1 subunit 1 (147 aa).

Disordered regions lie at residues M1–K25 and S125–T147.

This sequence belongs to the BLOC1S1 family. In terms of assembly, component of the biogenesis of lysosome-related organelles complex-1 (BLOC-1) composed of Blos1, Blos2, Blos3, Blos4, Dysb, Muted, Pldn and Snapin. Interacts with Pldn.

In terms of biological role, component of the biogenesis of lysosome-related organelles complex-1 (BLOC-1) involved in pigment granule biogenesis and membrane trafficking in synapses. In response to high synaptic activity at neuromuscular junctions, stabilizes Pldn protein levels and, together with Pldn, plays a role in promoting efficient synaptic vesicle recycling and re-formation through early endosomes. This chain is Biogenesis of lysosome-related organelles complex 1 subunit 1, found in Drosophila melanogaster (Fruit fly).